The following is a 120-amino-acid chain: Adult-specific rigid cuticular protein 11.9 (120 aa).

The region spanning 9 to 87 (GGAYNFGYNT…ALAAMAPKAP (79 aa)) is the Chitin-binding type R&amp;R domain.

Its function is as follows. Component of the rigid cuticle of the spider. The chain is Adult-specific rigid cuticular protein 11.9 from Araneus diadematus (European garden spider).